Here is a 200-residue protein sequence, read N- to C-terminus: Recombination protein RecR (200 aa).

The segment at 57 to 72 adopts a C4-type zinc-finger fold; that stretch reads CRSCRTLTEEELCPQC. The Toprim domain maps to 80 to 175; it reads TLLCVVEGPT…VASRIAHGVP (96 aa).

It belongs to the RecR family.

In terms of biological role, may play a role in DNA repair. It seems to be involved in an RecBC-independent recombinational process of DNA repair. It may act with RecF and RecO. The polypeptide is Recombination protein RecR (Pseudomonas savastanoi pv. phaseolicola (strain 1448A / Race 6) (Pseudomonas syringae pv. phaseolicola (strain 1448A / Race 6))).